Consider the following 92-residue polypeptide: DNA-directed RNA polymerase subunit Rpo11 (92 aa).

This sequence belongs to the archaeal Rpo11/eukaryotic RPB11/RPC19 RNA polymerase subunit family. In terms of assembly, part of the RNA polymerase complex.

The protein resides in the cytoplasm. It carries out the reaction RNA(n) + a ribonucleoside 5'-triphosphate = RNA(n+1) + diphosphate. Functionally, DNA-dependent RNA polymerase (RNAP) catalyzes the transcription of DNA into RNA using the four ribonucleoside triphosphates as substrates. This chain is DNA-directed RNA polymerase subunit Rpo11, found in Methanosarcina barkeri (strain Fusaro / DSM 804).